The chain runs to 813 residues: MGSNLPAQPNLRLTTDGLYKRDVFRFPDPFAVATVGGEQTHTTSVIKKTLNPYWNEMFDLRVNEDSILAIQIFDQKKFKKKDQGFLGVINVRIGDVIDLQMGGDEMLTRDLKKSNDNLVVHGKLIINLSTNLSTPNTNQANGLHRSHVQSSTSSGLVPQVAPSSSHPAASGTAPVDPSASNPSLNPQRVPSTTRPSSTAAPASAAGAAVSNSHGSRTNLSSFEDSQGRLPAGWERREDNLGRTYYVDHNTRTTTWTRPSSNYNEHAQRSQREANMQLERRAHQSRMLPEDRTGANSPNLPESSQQAHTPPAGGSANAVSMMATGATTAGTGELPPGWEQRTTPEGRPYFVDHNTRTTTWVDPRRQQYIRMYGQNANGTNTTIQQQPVSQLGPLPSGWEMRLTNTARVYFVDHNTKTTTWDDPRLPSSLDQGVPQYKRDFRRKLIYFRSQPALRIMSGQCHVKVRRNNIFEDSYAEIMRQSASDLKKRLMIKFDGEDGLDYGGLSREFFFLLSHEMFNPFYCLFEYSAHDNYTLQINPHSGVNPEHLNYFKFIGRVVGLAIFHRRFLDSFFIGAFYKMMLRKKVSLQDMEGVDEDLHRNLTWTLDNDIEGVLELTFSVDDEKFGERRTIDLKPGGRDIPVTNENKAEYVELVTEWKIVKRVEEQFNAFMSGFNELIPADLVNVFDERELELLIGGIADIDVDDWKKHTDYRGYQESDEVIQNFWKIVRSWDAEQKSRLLQFTTGTSRIPVNGFKDLQGSDGPRRFTIEKSGDPAALPKSHTCFNRLDLPPYKSYETLEHKMSIAVEETLGFGQE.

One can recognise a C2 domain in the interval 1–109; it reads MGSNLPAQPN…QMGGDEMLTR (109 aa). Disordered stretches follow at residues 131 to 235 and 251 to 351; these read NLST…GWER and RTTT…YFVD. The span at 148-167 shows a compositional bias: polar residues; the sequence is VQSSTSSGLVPQVAPSSSHP. Residues 188–215 show a composition bias toward low complexity; sequence RVPSTTRPSSTAAPASAAGAAVSNSHGS. Residues 227–260 form the WW 1 domain; that stretch reads GRLPAGWERREDNLGRTYYVDHNTRTTTWTRPSS. The span at 251–264 shows a compositional bias: polar residues; sequence RTTTWTRPSSNYNE. A compositionally biased stretch (basic and acidic residues) spans 265 to 292; it reads HAQRSQREANMQLERRAHQSRMLPEDRT. Residues 293-307 show a composition bias toward polar residues; that stretch reads GANSPNLPESSQQAH. Over residues 322-331 the composition is skewed to low complexity; it reads ATGATTAGTG. WW domains are found at residues 331 to 364 and 391 to 424; these read GELP…DPRR and GPLP…DPRL. One can recognise an HECT domain in the interval 480–813; the sequence is SASDLKKRLM…VEETLGFGQE (334 aa). Residue Cys781 is the Glycyl thioester intermediate of the active site.

It belongs to the RSP5/NEDD4 family. In terms of assembly, interacts with creD.

The protein resides in the cytoplasm. It carries out the reaction S-ubiquitinyl-[E2 ubiquitin-conjugating enzyme]-L-cysteine + [acceptor protein]-L-lysine = [E2 ubiquitin-conjugating enzyme]-L-cysteine + N(6)-ubiquitinyl-[acceptor protein]-L-lysine.. It participates in protein modification; protein ubiquitination. In terms of biological role, E3 ubiquitin-protein ligase which accepts ubiquitin from an E2 ubiquitin-conjugating enzyme in the form of a thioester and then directly transfers the ubiquitin to targeted substrates. Probably involved in the regulatory network controlling carbon source utilization. The sequence is that of Probable E3 ubiquitin-protein ligase hulA (hulA) from Aspergillus fumigatus (strain CBS 144.89 / FGSC A1163 / CEA10) (Neosartorya fumigata).